The following is a 156-amino-acid chain: 3-hydroxyacyl-[acyl-carrier-protein] dehydratase FabZ (156 aa).

The active site involves histidine 57.

The protein belongs to the thioester dehydratase family. FabZ subfamily.

Its subcellular location is the cytoplasm. The catalysed reaction is a (3R)-hydroxyacyl-[ACP] = a (2E)-enoyl-[ACP] + H2O. Functionally, involved in unsaturated fatty acids biosynthesis. Catalyzes the dehydration of short chain beta-hydroxyacyl-ACPs and long chain saturated and unsaturated beta-hydroxyacyl-ACPs. This is 3-hydroxyacyl-[acyl-carrier-protein] dehydratase FabZ from Anaeromyxobacter dehalogenans (strain 2CP-1 / ATCC BAA-258).